Here is a 454-residue protein sequence, read N- to C-terminus: tRNA modification GTPase MnmE (454 aa).

3 residues coordinate (6S)-5-formyl-5,6,7,8-tetrahydrofolate: R23, E80, and K120. The TrmE-type G domain occupies 216-377; sequence GMKVVIAGRP…LRDHLKQSMG (162 aa). N226 is a binding site for K(+). GTP is bound by residues 226 to 231, 245 to 251, 270 to 273, 335 to 338, and 358 to 360; these read NAGKSS, TDIAGTT, DTAG, NKAD, and SAR. Residue S230 participates in Mg(2+) binding. 3 residues coordinate K(+): T245, I247, and T250. T251 contacts Mg(2+). K454 contacts (6S)-5-formyl-5,6,7,8-tetrahydrofolate.

This sequence belongs to the TRAFAC class TrmE-Era-EngA-EngB-Septin-like GTPase superfamily. TrmE GTPase family. As to quaternary structure, homodimer. Heterotetramer of two MnmE and two MnmG subunits. It depends on K(+) as a cofactor.

It localises to the cytoplasm. Exhibits a very high intrinsic GTPase hydrolysis rate. Involved in the addition of a carboxymethylaminomethyl (cmnm) group at the wobble position (U34) of certain tRNAs, forming tRNA-cmnm(5)s(2)U34. The sequence is that of tRNA modification GTPase MnmE from Yersinia pseudotuberculosis serotype O:1b (strain IP 31758).